The sequence spans 616 residues: MSWGTELWDQFDNLEKHTQWGIDILEKYIKFVKERTEIELSYAKQLRNLSKKYQPKKNSKEEEEYKYTACKAFLSTLNEMNDYAGQHEVISENMTSQITVDLMRYVQELKQERKSNFHDGRKAQQHIETCWKQLESSKRRFERDCKEADRAQQYFEKMDADINVTKADVEKARQQAQIRQQMAEDSKADYSLILQRFNQEQWEYYHTHIPNIFQKIQEMEERRIVRIGESMKTYAEVDRQVIPIIGKCLDGIVKAAESIDQKNDSQLVVEAYKSGFEPPGDIEFEDYTQPMKRTVSDNSLSSSKEGKPELRFGGKSRGKLWPFIKKNKLMSLLTSPHQPPPPPPASASPSAVPNGPQSPKQPKEPLSHRFNEFMTSKPKIHCFRSLKRGLSLKLGVTPEDFSNFPPEQRRKKLQQKVDDLNREIQKETDQRDAITKMKDVYLKNPQMGDPASLDQKLTEVTQNIEKLRLEAQKFEAWLAEVEGRLPARSEQARRQSGLYDGQTHQTVTNCAQDRESPDGSYTEEQSQESEHKVLAPDFDDEFDDEEPLPAIGTCKALYTFEGQNEGTISVVEGETLSVIEEDKGDGWTRIRRNEDEEGYVPTSYVEVYLDKNAKGS.

The tract at residues 1–79 (MSWGTELWDQ…CKAFLSTLNE (79 aa)) is required for self-association and induction of membrane tubulation. One can recognise an F-BAR domain in the interval 1-264 (MSWGTELWDQ…AAESIDQKND (264 aa)). The tract at residues 1 to 334 (MSWGTELWDQ…KKNKLMSLLT (334 aa)) is interaction with microtubules. N6-acetyllysine is present on residues Lys-66 and Lys-110. Residues 67-259 (YTACKAFLST…DGIVKAAESI (193 aa)) adopt a coiled-coil conformation. A required for self-association and induction of membrane tubulation region spans residues 251 to 616 (GIVKAAESID…VYLDKNAKGS (366 aa)). Disordered regions lie at residues 280-314 (GDIE…RFGG) and 332-366 (LLTS…KEPL). Phosphoserine is present on residues Ser-296 and Ser-299. Residues 337–346 (HQPPPPPPAS) show a composition bias toward pro residues. Ser-348 and Ser-358 each carry phosphoserine. A coiled-coil region spans residues 398 to 490 (PEDFSNFPPE…VEGRLPARSE (93 aa)). Residues 399–551 (EDFSNFPPEQ…FDDEEPLPAI (153 aa)) form an interaction with RND2 region. The region spanning 403-480 (NFPPEQRRKK…AQKFEAWLAE (78 aa)) is the REM-1 domain. The segment at 487–531 (ARSEQARRQSGLYDGQTHQTVTNCAQDRESPDGSYTEEQSQESEH) is disordered. Residues 494–616 (RQSGLYDGQT…VYLDKNAKGS (123 aa)) are interaction with PDE6G. Phosphoserine is present on Ser-496. Tyr-499 carries the post-translational modification Phosphotyrosine. The span at 502–511 (QTHQTVTNCA) shows a compositional bias: polar residues. Residues 513-616 (DRESPDGSYT…VYLDKNAKGS (104 aa)) are required for interaction with TNKS. At Ser-520 the chain carries Phosphoserine. An interaction with DNM1 and DNM3 region spans residues 534–616 (LAPDFDDEFD…VYLDKNAKGS (83 aa)). One can recognise an SH3 domain in the interval 549–610 (PAIGTCKALY…PTSYVEVYLD (62 aa)). The interval 549–616 (PAIGTCKALY…VYLDKNAKGS (68 aa)) is interaction with ARHGAP17, DAAM1, DIAPH1 and DIAPH2. An interaction with DNM2 and WASL region spans residues 552–608 (GTCKALYTFEGQNEGTISVVEGETLSVIEEDKGDGWTRIRRNEDEEGYVPTSYVEVY). Residues 552-609 (GTCKALYTFEGQNEGTISVVEGETLSVIEEDKGDGWTRIRRNEDEEGYVPTSYVEVYL) form an interaction with FASLG region.

It belongs to the FNBP1 family. As to quaternary structure, homodimerizes, the dimers can polymerize end-to-end to form filamentous structures. Interacts specifically with GTP-bound RND2 and CDC42. Interacts with AKAP9, ARHGAP17, DAAM1, DIAPH1, DIAPH2, DNM1, DNM2, DNM3, FASLG/FASL, microtubules, PDE6G, SNX2 and WASL/N-WASP. May interact with TNKS. As to expression, expressed in brain and testis.

The protein localises to the cytoplasm. Its subcellular location is the cytoskeleton. It localises to the cell cortex. It is found in the lysosome. The protein resides in the cytoplasmic vesicle. The protein localises to the cell membrane. Its subcellular location is the membrane. It localises to the clathrin-coated pit. Its function is as follows. Required to coordinate membrane tubulation with reorganization of the actin cytoskeleton during the late stage of clathrin-mediated endocytosis. Binds to lipids such as phosphatidylinositol 4,5-bisphosphate and phosphatidylserine and promotes membrane invagination and the formation of tubules. Also enhances actin polymerization via the recruitment of WASL/N-WASP, which in turn activates the Arp2/3 complex. Actin polymerization may promote the fission of membrane tubules to form endocytic vesicles. May act as a link between RND2 signaling and regulation of the actin cytoskeleton. May be required for the lysosomal retention of FASLG/FASL. The sequence is that of Formin-binding protein 1 (Fnbp1) from Mus musculus (Mouse).